The following is a 261-amino-acid chain: Thiazole synthase (261 aa).

Residue lysine 102 is the Schiff-base intermediate with DXP of the active site. 1-deoxy-D-xylulose 5-phosphate contacts are provided by residues glycine 163, 189-190 (AG), and 211-212 (NT).

The protein belongs to the ThiG family. As to quaternary structure, homotetramer. Forms heterodimers with either ThiH or ThiS.

Its subcellular location is the cytoplasm. The enzyme catalyses [ThiS sulfur-carrier protein]-C-terminal-Gly-aminoethanethioate + 2-iminoacetate + 1-deoxy-D-xylulose 5-phosphate = [ThiS sulfur-carrier protein]-C-terminal Gly-Gly + 2-[(2R,5Z)-2-carboxy-4-methylthiazol-5(2H)-ylidene]ethyl phosphate + 2 H2O + H(+). It participates in cofactor biosynthesis; thiamine diphosphate biosynthesis. Functionally, catalyzes the rearrangement of 1-deoxy-D-xylulose 5-phosphate (DXP) to produce the thiazole phosphate moiety of thiamine. Sulfur is provided by the thiocarboxylate moiety of the carrier protein ThiS. In vitro, sulfur can be provided by H(2)S. The sequence is that of Thiazole synthase from Acinetobacter baylyi (strain ATCC 33305 / BD413 / ADP1).